A 526-amino-acid chain; its full sequence is Phosphoenolpyruvate carboxykinase (ATP) (526 aa).

Arg-55, Tyr-190, and Lys-196 together coordinate substrate. Residues Lys-196, His-215, and 231-239 each bind ATP; that span reads GLSGTGKTT. Positions 196 and 215 each coordinate Mn(2+). Asp-252 contacts Mn(2+). ATP-binding residues include Glu-280, Arg-317, and Thr-442. Arg-317 provides a ligand contact to substrate.

This sequence belongs to the phosphoenolpyruvate carboxykinase (ATP) family. Requires Mn(2+) as cofactor.

Its subcellular location is the cytoplasm. It carries out the reaction oxaloacetate + ATP = phosphoenolpyruvate + ADP + CO2. The protein operates within carbohydrate biosynthesis; gluconeogenesis. Functionally, involved in the gluconeogenesis. Catalyzes the conversion of oxaloacetate (OAA) to phosphoenolpyruvate (PEP) through direct phosphoryl transfer between the nucleoside triphosphate and OAA. The polypeptide is Phosphoenolpyruvate carboxykinase (ATP) (Alkaliphilus oremlandii (strain OhILAs) (Clostridium oremlandii (strain OhILAs))).